We begin with the raw amino-acid sequence, 357 residues long: tRNA-specific 2-thiouridylase MnmA (357 aa).

Residues 6–13 (AMSGGVDS) and L32 contribute to the ATP site. The active-site Nucleophile is C101. A disulfide bond links C101 and C193. G125 lines the ATP pocket. The interaction with tRNA stretch occupies residues 143–145 (KDQ). Catalysis depends on C193, which acts as the Cysteine persulfide intermediate.

It belongs to the MnmA/TRMU family.

It is found in the cytoplasm. The enzyme catalyses S-sulfanyl-L-cysteinyl-[protein] + uridine(34) in tRNA + AH2 + ATP = 2-thiouridine(34) in tRNA + L-cysteinyl-[protein] + A + AMP + diphosphate + H(+). In terms of biological role, catalyzes the 2-thiolation of uridine at the wobble position (U34) of tRNA, leading to the formation of s(2)U34. This chain is tRNA-specific 2-thiouridylase MnmA, found in Mycolicibacterium gilvum (strain PYR-GCK) (Mycobacterium gilvum (strain PYR-GCK)).